Here is a 467-residue protein sequence, read N- to C-terminus: ESX-4 secretion system protein eccD4 (467 aa).

Helical transmembrane passes span 122–142, 152–172, 186–206, 209–229, 241–261, 264–284, 319–339, 344–364, 374–394, 401–421, and 439–459; these read GALA…RNAL, ATAG…VIAC, VIAT…VPGV, VLVA…ITGC, AVVV…VPAI, LATL…VLLA, LTSL…GTAV, IHRS…LLLL, SLVF…VAAD, PWIA…GFVA, and CLAL…YSAV.

Belongs to the EccD/Snm4 family. As to quaternary structure, part of the ESX-4 / type VII secretion system (T7SS), which is composed of cytosolic and membrane components.

It is found in the cell membrane. The sequence is that of ESX-4 secretion system protein eccD4 (eccD4) from Mycobacterium tuberculosis (strain CDC 1551 / Oshkosh).